Consider the following 636-residue polypeptide: Probable cyclin-dependent serine/threonine-protein kinase DDB_G0278487 (636 aa).

The tract at residues methionine 1–serine 41 is disordered. Residues tyrosine 64 to phenylalanine 343 form the Protein kinase domain. Residues isoleucine 70–valine 78 and lysine 93 each bind ATP. The active-site Proton acceptor is the aspartate 184. Disordered regions lie at residues glutamate 378–glutamine 408, lysine 473–tyrosine 506, serine 527–aspartate 555, and asparagine 579–histidine 636. Over residues lysine 473–arginine 485 the composition is skewed to basic and acidic residues. Low complexity predominate over residues glutamate 486–glutamate 499. Residues threonine 529 to aspartate 555 show a composition bias toward acidic residues. Low complexity-rich tracts occupy residues asparagine 579–glutamine 594 and asparagine 617–asparagine 628.

Belongs to the protein kinase superfamily. CMGC Ser/Thr protein kinase family. CDC2/CDKX subfamily.

The catalysed reaction is L-seryl-[protein] + ATP = O-phospho-L-seryl-[protein] + ADP + H(+). It carries out the reaction L-threonyl-[protein] + ATP = O-phospho-L-threonyl-[protein] + ADP + H(+). This chain is Probable cyclin-dependent serine/threonine-protein kinase DDB_G0278487, found in Dictyostelium discoideum (Social amoeba).